Here is a 222-residue protein sequence, read N- to C-terminus: Phosphoglycolate phosphatase (222 aa).

Asp8 (nucleophile) is an active-site residue. Mg(2+) contacts are provided by Asp8 and Asp10. Substrate is bound at residue Lys146. Mg(2+) is bound by residues Asp169 and Asp173.

This sequence belongs to the archaeal SPP-like hydrolase family. Mg(2+) serves as cofactor.

It carries out the reaction 2-phosphoglycolate + H2O = glycolate + phosphate. Its function is as follows. Catalyzes the dephosphorylation of 2-phosphoglycolate. This chain is Phosphoglycolate phosphatase, found in Methanothrix thermoacetophila (strain DSM 6194 / JCM 14653 / NBRC 101360 / PT) (Methanosaeta thermophila).